Consider the following 434-residue polypeptide: Serine hydroxymethyltransferase (434 aa).

(6S)-5,6,7,8-tetrahydrofolate contacts are provided by residues leucine 133 and 137–139; that span reads GHL. N6-(pyridoxal phosphate)lysine is present on lysine 242.

The protein belongs to the SHMT family. In terms of assembly, homodimer. It depends on pyridoxal 5'-phosphate as a cofactor.

Its subcellular location is the cytoplasm. The catalysed reaction is (6R)-5,10-methylene-5,6,7,8-tetrahydrofolate + glycine + H2O = (6S)-5,6,7,8-tetrahydrofolate + L-serine. It participates in one-carbon metabolism; tetrahydrofolate interconversion. It functions in the pathway amino-acid biosynthesis; glycine biosynthesis; glycine from L-serine: step 1/1. Functionally, catalyzes the reversible interconversion of serine and glycine with tetrahydrofolate (THF) serving as the one-carbon carrier. This reaction serves as the major source of one-carbon groups required for the biosynthesis of purines, thymidylate, methionine, and other important biomolecules. Also exhibits THF-independent aldolase activity toward beta-hydroxyamino acids, producing glycine and aldehydes, via a retro-aldol mechanism. This chain is Serine hydroxymethyltransferase, found in Methylorubrum extorquens (strain CM4 / NCIMB 13688) (Methylobacterium extorquens).